The following is a 469-amino-acid chain: 3-isopropylmalate dehydratase large subunit (469 aa).

Residues C349, C410, and C413 each coordinate [4Fe-4S] cluster.

This sequence belongs to the aconitase/IPM isomerase family. LeuC type 1 subfamily. In terms of assembly, heterodimer of LeuC and LeuD. It depends on [4Fe-4S] cluster as a cofactor.

The enzyme catalyses (2R,3S)-3-isopropylmalate = (2S)-2-isopropylmalate. It functions in the pathway amino-acid biosynthesis; L-leucine biosynthesis; L-leucine from 3-methyl-2-oxobutanoate: step 2/4. In terms of biological role, catalyzes the isomerization between 2-isopropylmalate and 3-isopropylmalate, via the formation of 2-isopropylmaleate. The sequence is that of 3-isopropylmalate dehydratase large subunit from Neisseria meningitidis serogroup B (strain ATCC BAA-335 / MC58).